A 164-amino-acid chain; its full sequence is MKGKKSVISRLNKLLVGELVAADQYFVHSRMYQEWGLQKLYERIDHERMDELEHADLLIRRILFLEGTPDISKRPGPNIGKDVPSMLKNDLDYELAVIAELKEVIAHCEGPKRTMTAAASCSTILEETEQDHTLWLEQQLGLIARMGLQNYIQSAAGDIAQGAS.

Residues 1 to 147 (MKGKKSVISR…QQLGLIARMG (147 aa)) form the Ferritin-like diiron domain. Fe cation is bound by residues Glu-18, Glu-51, His-54, Glu-94, Glu-129, and His-132.

It belongs to the bacterioferritin family. In terms of assembly, heterooligomer of 24 subunits, arranged as 12 dimers, that are packed together to form an approximately spherical molecule with a central cavity, in which large amounts of iron can be deposited.

It catalyses the reaction 4 Fe(2+) + O2 + 4 H(+) = 4 Fe(3+) + 2 H2O. The catalysed reaction is Fe(2+)(in) = Fe(2+)(out). Iron-storage protein, whose ferroxidase center binds Fe(2+), oxidizes it using dioxygen to Fe(3+), and participates in the subsequent Fe(3+) oxide mineral core formation within the central cavity of the BFR protein shell. This Paramagnetospirillum magnetotacticum (Aquaspirillum magnetotacticum) protein is Bacterial ferritin.